A 129-amino-acid polypeptide reads, in one-letter code: Holo-[acyl-carrier-protein] synthase (129 aa).

Mg(2+)-binding residues include Asp8 and Glu58.

This sequence belongs to the P-Pant transferase superfamily. AcpS family. Mg(2+) serves as cofactor.

The protein localises to the cytoplasm. It catalyses the reaction apo-[ACP] + CoA = holo-[ACP] + adenosine 3',5'-bisphosphate + H(+). Its function is as follows. Transfers the 4'-phosphopantetheine moiety from coenzyme A to a Ser of acyl-carrier-protein. The sequence is that of Holo-[acyl-carrier-protein] synthase from Acidithiobacillus ferrooxidans (strain ATCC 53993 / BNL-5-31) (Leptospirillum ferrooxidans (ATCC 53993)).